The following is a 206-amino-acid chain: Cytochrome c biogenesis ATP-binding export protein CcmA (206 aa).

An ABC transporter domain is found at 4–205; the sequence is LEGIDLTCIR…AGAAIQRLQL (202 aa). 36 to 43 is a binding site for ATP; the sequence is GPNGSGKT.

The protein belongs to the ABC transporter superfamily. CcmA exporter (TC 3.A.1.107) family. As to quaternary structure, the complex is composed of two ATP-binding proteins (CcmA) and two transmembrane proteins (CcmB).

The protein localises to the cell inner membrane. It catalyses the reaction heme b(in) + ATP + H2O = heme b(out) + ADP + phosphate + H(+). In terms of biological role, part of the ABC transporter complex CcmAB involved in the biogenesis of c-type cytochromes; once thought to export heme, this seems not to be the case, but its exact role is uncertain. Responsible for energy coupling to the transport system. The polypeptide is Cytochrome c biogenesis ATP-binding export protein CcmA (Nitrosospira multiformis (strain ATCC 25196 / NCIMB 11849 / C 71)).